Here is a 54-residue protein sequence, read N- to C-terminus: MKKYTCTVCGYIYNPEDGDPDNGVNPGTDFKDIPDDWVCPLCGVGKDQFEEVEE.

At Met1 the chain carries N-formylmethionine. The region spanning Met1–Glu54 is the Rubredoxin-like domain. Positions 6, 9, 39, and 42 each coordinate Fe cation.

The protein belongs to the rubredoxin family. Fe(3+) serves as cofactor.

Its function is as follows. Rubredoxin is a small nonheme, iron protein lacking acid-labile sulfide. Its single Fe, chelated to 4 Cys, functions as an electron acceptor and may also stabilize the conformation of the molecule. The chain is Rubredoxin from Clostridium pasteurianum.